The following is a 354-amino-acid chain: MGEQPIFTTRAHVFQIDPSTKKNWVPASKQAVTVSYFYDVTRNSYRIISVDGAKVIINSTITPNMTFTKTSQKFGQWADSRANTVFGLGFSSEQQLTKFAEKFQEVREAARLARDKSQEKIETSSNHSQESGCETPSSTQASSVNGTDDEKASHASPADTHLKSENDKLKIALTQSAANVKKWEIELQTLRESNARLTTALQESAASVEQWKRQFSICRDENDRLRSKIEELEEQCGEINREKEKNTQLKRRIEELESEVREKEMELKDLRKQSEIIPQLMSECEYVSEKLEAAERDNQNLEDKVRSLKTDIEESKYRQRHLKGELKSFLEVLDGKIDDLHDFRRGLSKLGTDN.

Positions 1–110 constitute a WH1 domain; sequence MGEQPIFTTR…EKFQEVREAA (110 aa). The stretch at 92–120 forms a coiled coil; the sequence is SEQQLTKFAEKFQEVREAARLARDKSQEK. The interval 114–163 is disordered; the sequence is RDKSQEKIETSSNHSQESGCETPSSTQASSVNGTDDEKASHASPADTHLK. Residues 123–146 are compositionally biased toward polar residues; it reads TSSNHSQESGCETPSSTQASSVNG. Residues 160–329 are a coiled coil; sequence THLKSENDKL…RHLKGELKSF (170 aa).

This sequence belongs to the Homer family. As to quaternary structure, isoform 1 and isoform 2 encode coiled-coil structures that mediate homo- and heteromultimerization. Interacts with NFATC2; interaction is reduced by AKT activation. Interacts with NFATC1 and NFATC4. Interacts with DAGLA (via PPXXF motif); this interaction is required for the cell membrane localization of DAGLA. As to expression, constitutively expressed in the adult hippocampus.

The protein resides in the cytoplasm. It localises to the cell membrane. It is found in the postsynaptic density. Its subcellular location is the synapse. The protein localises to the cell projection. The protein resides in the stereocilium. Postsynaptic density scaffolding protein. Binds and cross-links cytoplasmic regions of GRM1, GRM5, ITPR1, DNM3, RYR1, RYR2, SHANK1 and SHANK3. By physically linking GRM1 and GRM5 with ER-associated ITPR1 receptors, it aids the coupling of surface receptors to intracellular calcium release. May also couple GRM1 to PI3 kinase through its interaction with AGAP2. Isoforms can be differently regulated and may play an important role in maintaining the plasticity at glutamatergic synapses. Required for normal hearing. Negatively regulates T cell activation by inhibiting the calcineurin-NFAT pathway. Acts by competing with calcineurin/PPP3CA for NFAT protein binding, hence preventing NFAT activation by PPP3CA. The chain is Homer protein homolog 2 from Rattus norvegicus (Rat).